The following is a 291-amino-acid chain: Phosphatidylglycerol--prolipoprotein diacylglyceryl transferase (291 aa).

7 helical membrane passes run 21–41 (VALH…MWLA), 60–80 (LLYA…VLFY), 96–116 (WDGG…MIIF), 130–150 (FIAP…FING), 198–218 (SQLY…NLFI), 225–245 (GAVS…VEFF), and 260–280 (ISMG…MMVW). R143 is a binding site for a 1,2-diacyl-sn-glycero-3-phospho-(1'-sn-glycerol).

This sequence belongs to the Lgt family.

The protein localises to the cell inner membrane. The enzyme catalyses L-cysteinyl-[prolipoprotein] + a 1,2-diacyl-sn-glycero-3-phospho-(1'-sn-glycerol) = an S-1,2-diacyl-sn-glyceryl-L-cysteinyl-[prolipoprotein] + sn-glycerol 1-phosphate + H(+). The protein operates within protein modification; lipoprotein biosynthesis (diacylglyceryl transfer). In terms of biological role, catalyzes the transfer of the diacylglyceryl group from phosphatidylglycerol to the sulfhydryl group of the N-terminal cysteine of a prolipoprotein, the first step in the formation of mature lipoproteins. The sequence is that of Phosphatidylglycerol--prolipoprotein diacylglyceryl transferase from Salmonella choleraesuis (strain SC-B67).